Consider the following 285-residue polypeptide: Ribosomal RNA small subunit methyltransferase A (285 aa).

Asparagine 29, leucine 31, glycine 56, glutamate 77, aspartate 102, and asparagine 123 together coordinate S-adenosyl-L-methionine.

Belongs to the class I-like SAM-binding methyltransferase superfamily. rRNA adenine N(6)-methyltransferase family. RsmA subfamily.

The protein resides in the cytoplasm. It catalyses the reaction adenosine(1518)/adenosine(1519) in 16S rRNA + 4 S-adenosyl-L-methionine = N(6)-dimethyladenosine(1518)/N(6)-dimethyladenosine(1519) in 16S rRNA + 4 S-adenosyl-L-homocysteine + 4 H(+). In terms of biological role, specifically dimethylates two adjacent adenosines (A1518 and A1519) in the loop of a conserved hairpin near the 3'-end of 16S rRNA in the 30S particle. May play a critical role in biogenesis of 30S subunits. This chain is Ribosomal RNA small subunit methyltransferase A, found in Clostridium perfringens (strain ATCC 13124 / DSM 756 / JCM 1290 / NCIMB 6125 / NCTC 8237 / Type A).